Consider the following 314-residue polypeptide: tRNA dimethylallyltransferase (314 aa).

G10 to T17 contributes to the ATP binding site. Residue T12–T17 participates in substrate binding. 4 interaction with substrate tRNA regions span residues D35–Q38, R160–R164, Q239–K244, and K272–R279.

Belongs to the IPP transferase family. In terms of assembly, monomer. The cofactor is Mg(2+).

It carries out the reaction adenosine(37) in tRNA + dimethylallyl diphosphate = N(6)-dimethylallyladenosine(37) in tRNA + diphosphate. In terms of biological role, catalyzes the transfer of a dimethylallyl group onto the adenine at position 37 in tRNAs that read codons beginning with uridine, leading to the formation of N6-(dimethylallyl)adenosine (i(6)A). This is tRNA dimethylallyltransferase (miaA) from Halalkalibacterium halodurans (strain ATCC BAA-125 / DSM 18197 / FERM 7344 / JCM 9153 / C-125) (Bacillus halodurans).